We begin with the raw amino-acid sequence, 146 residues long: Myoglobin (146 aa).

Residues Gly-2–Lys-141 form the Globin domain. A nitrite-binding site is contributed by His-60. His-60 contributes to the O2 binding site. His-89 is a heme b binding site.

This sequence belongs to the globin family. In terms of assembly, monomeric.

It is found in the cytoplasm. The protein localises to the sarcoplasm. It carries out the reaction Fe(III)-heme b-[protein] + nitric oxide + H2O = Fe(II)-heme b-[protein] + nitrite + 2 H(+). The enzyme catalyses H2O2 + AH2 = A + 2 H2O. Its function is as follows. Monomeric heme protein which primary function is to store oxygen and facilitate its diffusion within muscle tissues. Reversibly binds oxygen through a pentacoordinated heme iron and enables its timely and efficient release as needed during periods of heightened demand. Depending on the oxidative conditions of tissues and cells, and in addition to its ability to bind oxygen, it also has a nitrite reductase activity whereby it regulates the production of bioactive nitric oxide. Under stress conditions, like hypoxia and anoxia, it also protects cells against reactive oxygen species thanks to its pseudoperoxidase activity. The chain is Myoglobin (mb) from Tetraodon nigroviridis (Spotted green pufferfish).